The chain runs to 1169 residues: Polyamine-transporting ATPase 13A2 (1169 aa).

Topologically, residues 1–44 are cytoplasmic; sequence MSADSSLLMGSTPPSYGTLTTGTSIDPLSSSASSVRLSGYCGSP. Residues 45 to 65 lie within the membrane without spanning it; the sequence is WRAIGYHAAVWMLAGIPWLLF. Residues 66–225 lie on the Cytoplasmic side of the membrane; it reads RWKPLWGVRL…ISIPVKSYLQ (160 aa). A helical transmembrane segment spans residues 226–246; sequence LLADEALNPYYGFQAFSIALW. Topologically, residues 247-250 are lumenal; sequence LADH. The helical transmembrane segment at 251–271 threads the bilayer; sequence YYWYALCIFLISAISICLALY. Residues 272 to 422 lie on the Cytoplasmic side of the membrane; it reads KTRKQSLTLR…SFKFYKHSMK (151 aa). Residues 423–443 traverse the membrane as a helical segment; that stretch reads FVAALSVLALLGTVYSIIILY. Residues 444-458 are Lumenal-facing; it reads RNRVPVREIVIRALD. A helical membrane pass occupies residues 459–479; sequence LVTVVVPPALPAAMTVCTLYA. Residues 480-919 lie on the Cytoplasmic side of the membrane; that stretch reads QSRLRTQGIF…REGRCSLDTS (440 aa). Asp-508 (4-aspartylphosphate intermediate) is an active-site residue. Positions 867 and 871 each coordinate Mg(2+). Residues 920-940 traverse the membrane as a helical segment; it reads FSVFKYMALYSLTQFISVLIL. Over 941-946 the chain is Lumenal; that stretch reads YTINTN. A helical membrane pass occupies residues 947–967; the sequence is LGDLQFLAIDLVITTTVAVLM. Residues 968 to 993 are Cytoplasmic-facing; the sequence is SRTGPALTLVRARPPGALLSVPVLGS. A helical transmembrane segment spans residues 994–1014; that stretch reads LLLQVALVAGIQLGGYFLVIA. The Lumenal portion of the chain corresponds to 1015 to 1037; that stretch reads QPWFVPLNRTVPAPDNLPNYENT. Residue Asn-1022 is glycosylated (N-linked (GlcNAc...) asparagine). The chain crosses the membrane as a helical span at residues 1038 to 1058; the sequence is VVFSLSGFQYLILAAAVSKGA. Topologically, residues 1059 to 1069 are cytoplasmic; the sequence is PFRQPLYTNVP. The chain crosses the membrane as a helical span at residues 1070–1090; the sequence is FLVALALLGSVLVGLILVPGL. Residues 1091–1106 are Lumenal-facing; sequence LQGPLGLRNIVDSSFK. A helical transmembrane segment spans residues 1107–1127; the sequence is LLLLGLVAFNFVGAFMLESVL. The Cytoplasmic portion of the chain corresponds to 1128–1169; it reads DQCLPACLRWLRPKRASKKQFKRLQQELAEHPWPTLPVGSVR.

Belongs to the cation transport ATPase (P-type) (TC 3.A.3) family. Type V subfamily. As to quaternary structure, interacts with MYCBP2; the interaction inhibits the ubiquitination of TSC2 by MYCBP2. Interacts with HDAC6; the interaction results in recruitment of HDAC6 to lysosomes to promote CTTN deacetylation. In terms of processing, autophosphorylated. Accumulates in an inactive autophosphorylated state and autophosphorylation is stimulated by phosphatidic acid and phosphatidylinositol 3,5-bisphosphate but not by Mn(2+) or Zn(2+). The presence of spermine results in a dose-dependent reduction in autophosphorylation.

It is found in the lysosome membrane. Its subcellular location is the late endosome membrane. The protein resides in the endosome. The protein localises to the multivesicular body membrane. It localises to the cytoplasmic vesicle. It is found in the autophagosome membrane. The enzyme catalyses spermidine(out) + ATP + H2O = spermidine(in) + ADP + phosphate + H(+). The catalysed reaction is spermine(out) + ATP + H2O = spermine(in) + ADP + phosphate + H(+). Its activity is regulated as follows. Accumulates in an inactive autophosphorylated state. The presence of spermine results in a dose-dependent reduction in autophosphorylation. Its function is as follows. ATPase which acts as a lysosomal polyamine exporter with high affinity for spermine. Also stimulates cellular uptake of polyamines and protects against polyamine toxicity. Plays a role in intracellular cation homeostasis and the maintenance of neuronal integrity. Contributes to cellular zinc homeostasis. Confers cellular protection against Mn(2+) and Zn(2+) toxicity and mitochondrial stress. Required for proper lysosomal and mitochondrial maintenance. Regulates the autophagy-lysosome pathway through the control of SYT11 expression at both transcriptional and post-translational levels. Facilitates recruitment of deacetylase HDAC6 to lysosomes to deacetylate CTTN, leading to actin polymerization, promotion of autophagosome-lysosome fusion and completion of autophagy. Promotes secretion of exosomes as well as secretion of SCNA via exosomes. Plays a role in lipid homeostasis. In Mus musculus (Mouse), this protein is Polyamine-transporting ATPase 13A2.